A 142-amino-acid polypeptide reads, in one-letter code: Transcriptional regulator MraZ (142 aa).

2 consecutive SpoVT-AbrB domains span residues 5–47 and 76–119; these read THTP…PAPE and AHDE…DRVA.

It belongs to the MraZ family. In terms of assembly, forms oligomers.

Its subcellular location is the cytoplasm. The protein localises to the nucleoid. This chain is Transcriptional regulator MraZ, found in Salinispora arenicola (strain CNS-205).